The sequence spans 569 residues: Proline--tRNA ligase (569 aa).

Belongs to the class-II aminoacyl-tRNA synthetase family. ProS type 1 subfamily. In terms of assembly, homodimer.

The protein resides in the cytoplasm. It catalyses the reaction tRNA(Pro) + L-proline + ATP = L-prolyl-tRNA(Pro) + AMP + diphosphate. In terms of biological role, catalyzes the attachment of proline to tRNA(Pro) in a two-step reaction: proline is first activated by ATP to form Pro-AMP and then transferred to the acceptor end of tRNA(Pro). As ProRS can inadvertently accommodate and process non-cognate amino acids such as alanine and cysteine, to avoid such errors it has two additional distinct editing activities against alanine. One activity is designated as 'pretransfer' editing and involves the tRNA(Pro)-independent hydrolysis of activated Ala-AMP. The other activity is designated 'posttransfer' editing and involves deacylation of mischarged Ala-tRNA(Pro). The misacylated Cys-tRNA(Pro) is not edited by ProRS. This Shewanella woodyi (strain ATCC 51908 / MS32) protein is Proline--tRNA ligase.